We begin with the raw amino-acid sequence, 433 residues long: 4-hydroxy-3-methylbut-2-en-1-yl diphosphate synthase (flavodoxin) (433 aa).

Positions 1–10 are enriched in polar residues; the sequence is MRYMQDSSMP. The tract at residues 1 to 24 is disordered; the sequence is MRYMQDSSMPCQDASPPDVGAAPR. Positions 320, 323, 366, and 373 each coordinate [4Fe-4S] cluster.

The protein belongs to the IspG family. Requires [4Fe-4S] cluster as cofactor.

The catalysed reaction is (2E)-4-hydroxy-3-methylbut-2-enyl diphosphate + oxidized [flavodoxin] + H2O + 2 H(+) = 2-C-methyl-D-erythritol 2,4-cyclic diphosphate + reduced [flavodoxin]. It functions in the pathway isoprenoid biosynthesis; isopentenyl diphosphate biosynthesis via DXP pathway; isopentenyl diphosphate from 1-deoxy-D-xylulose 5-phosphate: step 5/6. In terms of biological role, converts 2C-methyl-D-erythritol 2,4-cyclodiphosphate (ME-2,4cPP) into 1-hydroxy-2-methyl-2-(E)-butenyl 4-diphosphate. The chain is 4-hydroxy-3-methylbut-2-en-1-yl diphosphate synthase (flavodoxin) from Bordetella bronchiseptica (strain ATCC BAA-588 / NCTC 13252 / RB50) (Alcaligenes bronchisepticus).